Reading from the N-terminus, the 379-residue chain is Queuine tRNA-ribosyltransferase (379 aa).

Residue Asp-93 is the Proton acceptor of the active site. Substrate is bound by residues 93–97 (DSGGF), Asp-147, Gln-191, and Gly-218. An RNA binding region spans residues 249–255 (GVGKPED). Asp-268 functions as the Nucleophile in the catalytic mechanism. Positions 273 to 277 (TRNAR) are RNA binding; important for wobble base 34 recognition. Residues Cys-306, Cys-308, Cys-311, and His-337 each contribute to the Zn(2+) site.

The protein belongs to the queuine tRNA-ribosyltransferase family. As to quaternary structure, homodimer. Within each dimer, one monomer is responsible for RNA recognition and catalysis, while the other monomer binds to the replacement base PreQ1. The cofactor is Zn(2+).

It catalyses the reaction 7-aminomethyl-7-carbaguanine + guanosine(34) in tRNA = 7-aminomethyl-7-carbaguanosine(34) in tRNA + guanine. It participates in tRNA modification; tRNA-queuosine biosynthesis. In terms of biological role, catalyzes the base-exchange of a guanine (G) residue with the queuine precursor 7-aminomethyl-7-deazaguanine (PreQ1) at position 34 (anticodon wobble position) in tRNAs with GU(N) anticodons (tRNA-Asp, -Asn, -His and -Tyr). Catalysis occurs through a double-displacement mechanism. The nucleophile active site attacks the C1' of nucleotide 34 to detach the guanine base from the RNA, forming a covalent enzyme-RNA intermediate. The proton acceptor active site deprotonates the incoming PreQ1, allowing a nucleophilic attack on the C1' of the ribose to form the product. After dissociation, two additional enzymatic reactions on the tRNA convert PreQ1 to queuine (Q), resulting in the hypermodified nucleoside queuosine (7-(((4,5-cis-dihydroxy-2-cyclopenten-1-yl)amino)methyl)-7-deazaguanosine). The chain is Queuine tRNA-ribosyltransferase from Actinobacillus succinogenes (strain ATCC 55618 / DSM 22257 / CCUG 43843 / 130Z).